Consider the following 147-residue polypeptide: Large ribosomal subunit protein bL9 (147 aa).

This sequence belongs to the bacterial ribosomal protein bL9 family.

Its function is as follows. Binds to the 23S rRNA. This is Large ribosomal subunit protein bL9 from Geotalea daltonii (strain DSM 22248 / JCM 15807 / FRC-32) (Geobacter daltonii).